Reading from the N-terminus, the 398-residue chain is 4-hydroxy-3-methylbut-2-en-1-yl diphosphate synthase (ferredoxin) (398 aa).

Residues cysteine 306, cysteine 309, cysteine 340, and glutamate 347 each coordinate [4Fe-4S] cluster.

Belongs to the IspG family. It depends on [4Fe-4S] cluster as a cofactor.

The catalysed reaction is (2E)-4-hydroxy-3-methylbut-2-enyl diphosphate + 2 oxidized [2Fe-2S]-[ferredoxin] + H2O = 2-C-methyl-D-erythritol 2,4-cyclic diphosphate + 2 reduced [2Fe-2S]-[ferredoxin] + H(+). It participates in isoprenoid biosynthesis; isopentenyl diphosphate biosynthesis via DXP pathway; isopentenyl diphosphate from 1-deoxy-D-xylulose 5-phosphate: step 5/6. Converts 2C-methyl-D-erythritol 2,4-cyclodiphosphate (ME-2,4cPP) into 1-hydroxy-2-methyl-2-(E)-butenyl 4-diphosphate. In Synechococcus sp. (strain CC9605), this protein is 4-hydroxy-3-methylbut-2-en-1-yl diphosphate synthase (ferredoxin).